Here is a 361-residue protein sequence, read N- to C-terminus: D-malate dehydrogenase [decarboxylating] (361 aa).

Aspartate 224, aspartate 248, and aspartate 252 together coordinate Mn(2+).

It belongs to the isocitrate and isopropylmalate dehydrogenases family. Mg(2+) is required as a cofactor. Mn(2+) serves as cofactor.

The protein resides in the cytoplasm. It catalyses the reaction (R)-malate + NAD(+) = pyruvate + CO2 + NADH. Functionally, catalyzes the NAD(+)-dependent oxidative decarboxylation of D-malate into pyruvate. Is essential for aerobic growth on D-malate as the sole carbon source. But is not required for anaerobic D-malate utilization, although DmlA is expressed and active in those conditions. Appears to be not able to use L-tartrate as a substrate for dehydrogenation instead of D-malate. The polypeptide is D-malate dehydrogenase [decarboxylating] (dmlA) (Escherichia coli (strain K12)).